A 360-amino-acid chain; its full sequence is Histidinol-phosphate aminotransferase (360 aa).

Residue Lys222 is modified to N6-(pyridoxal phosphate)lysine.

It belongs to the class-II pyridoxal-phosphate-dependent aminotransferase family. Histidinol-phosphate aminotransferase subfamily. As to quaternary structure, homodimer. Pyridoxal 5'-phosphate serves as cofactor.

The catalysed reaction is L-histidinol phosphate + 2-oxoglutarate = 3-(imidazol-4-yl)-2-oxopropyl phosphate + L-glutamate. The protein operates within amino-acid biosynthesis; L-histidine biosynthesis; L-histidine from 5-phospho-alpha-D-ribose 1-diphosphate: step 7/9. This chain is Histidinol-phosphate aminotransferase, found in Listeria monocytogenes serotype 4b (strain F2365).